The sequence spans 321 residues: Olfactory receptor 3A3 (321 aa).

The Extracellular portion of the chain corresponds to 1–34; the sequence is MSLQKLMEPEAGTNRTAVAEFILLGLVQTEEMQP. Asn-14 carries an N-linked (GlcNAc...) asparagine glycan. Residues 35–58 traverse the membrane as a helical segment; it reads VVFVLLLFAYLVTTGGNLSILAAV. The Cytoplasmic segment spans residues 59-66; sequence LVEPKLHA. A helical transmembrane segment spans residues 67–88; it reads PMYFFLGNLSVLDVGCITVTVP. Topologically, residues 89–109 are extracellular; it reads AMLGRLLSHKSTISYDACLSQ. Residues Cys-106 and Cys-198 are joined by a disulfide bond. The helical transmembrane segment at 110–129 threads the bilayer; that stretch reads LFFFHLLAGMDCFLLTAMAY. Residues 130 to 149 are Cytoplasmic-facing; that stretch reads DRLLAICQPLTYSTRMSQTV. A helical transmembrane segment spans residues 150 to 167; that stretch reads QRMLVAASWACAFTNALT. At 168 to 205 the chain is on the extracellular side; sequence HTVAMSTLNFCGPNEVNHFYCDLPQLFQLSCSSTQLNE. Residues 206-228 traverse the membrane as a helical segment; the sequence is LLLFVAAAFMAVAPLVFISVSYA. Residues 229–245 lie on the Cytoplasmic side of the membrane; it reads HVVAAVLQIRSAEGRKK. Residues 246-268 form a helical membrane-spanning segment; that stretch reads AFSTCGSHLTVVGIFYGTGVFSY. Residues 269–281 lie on the Extracellular side of the membrane; sequence MRLGSVESSDKDK. Residues 282–301 form a helical membrane-spanning segment; sequence GVGVFMTVINPMLNPLIYSL. The Cytoplasmic segment spans residues 302–321; that stretch reads RNTDVQGALCQLLVGKRSLT.

This sequence belongs to the G-protein coupled receptor 1 family.

The protein localises to the cell membrane. In terms of biological role, odorant receptor. The polypeptide is Olfactory receptor 3A3 (OR3A3) (Homo sapiens (Human)).